Here is a 555-residue protein sequence, read N- to C-terminus: Urocanate hydratase (555 aa).

NAD(+) contacts are provided by residues 52–53, Gln130, 176–178, Glu196, Arg201, 242–243, 263–267, 273–274, and Tyr322; these read GG, GMG, NA, QTSAH, and YL. Residue Cys410 is part of the active site. An NAD(+)-binding site is contributed by Gly492.

The protein belongs to the urocanase family. The cofactor is NAD(+).

The protein localises to the cytoplasm. The catalysed reaction is 4-imidazolone-5-propanoate = trans-urocanate + H2O. Its pathway is amino-acid degradation; L-histidine degradation into L-glutamate; N-formimidoyl-L-glutamate from L-histidine: step 2/3. In terms of biological role, catalyzes the conversion of urocanate to 4-imidazolone-5-propionate. This chain is Urocanate hydratase, found in Shewanella sp. (strain W3-18-1).